The chain runs to 336 residues: MQTNKRLKMASCVKAAAMLGMLLSVSISTTAQADSWRGWNIHPPSYPNGKALESFAKEVAEKTEGRVEPKVYHNAVLGDQPDAIEQTRSGALDFANFNMGPMGPIVPAANVLSLPFIFKSPDDMYRIMDGEIGERFADALAEKNLIVLSWFGSGARSLYNTDHPVETPDDVEGLKVRVMNNDLYVQMIDEMGGNATPMAYGEVYQSLKTGVIDGAENNYPSYESSGHYEVANYYSLTEHLILPECLCVAKASWEELSEKDRQAIREAAEDAAKEQRALWEEGVQASKQKILDAGVKINEVDDKSAFQAKMQPIYDQFVQEHPELESLVTDIQDAQS.

The signal sequence occupies residues 1 to 33 (MQTNKRLKMASCVKAAAMLGMLLSVSISTTAQA). Beta-D-glucuronate contacts are provided by residues His42, Gln80, Arg156, Arg177, Tyr200, 217–218 (NN), and Glu244.

The protein belongs to the bacterial solute-binding protein 7 family. In terms of assembly, the complex is comprised of an extracytoplasmic solute-binding protein and a heteromeric permease formed by two transmembrane proteins.

It is found in the periplasm. In terms of biological role, solute-binding protein that binds D-glucuronate (in vitro). Probably part of a tripartite ATP-independent periplasmic (TRAP) transport system that mediates solute transport into the cytoplasm. The protein is Solute-binding protein Csal_2479 of Chromohalobacter salexigens (strain ATCC BAA-138 / DSM 3043 / CIP 106854 / NCIMB 13768 / 1H11).